The chain runs to 227 residues: Cytochrome c oxidase subunit 2 (227 aa).

The Mitochondrial intermembrane segment spans residues 1–14 (MAHAAQVGLQDATS). Residues 15–45 (PIMEELITFHDHALMIIFLICFLVLYALFLT) form a helical membrane-spanning segment. Over 46 to 59 (LTTKLTNTNISDAQ) the chain is Mitochondrial matrix. Residues 60–87 (EMETVWTILPAIILVLIALPSLRILYMT) form a helical membrane-spanning segment. At 88–227 (DEVNDPSLTI…IFEMGPVFTL (140 aa)) the chain is on the mitochondrial intermembrane side. Residues histidine 161, cysteine 196, glutamate 198, cysteine 200, histidine 204, and methionine 207 each coordinate Cu cation. Glutamate 198 serves as a coordination point for Mg(2+).

Belongs to the cytochrome c oxidase subunit 2 family. As to quaternary structure, component of the cytochrome c oxidase (complex IV, CIV), a multisubunit enzyme composed of 14 subunits. The complex is composed of a catalytic core of 3 subunits MT-CO1, MT-CO2 and MT-CO3, encoded in the mitochondrial DNA, and 11 supernumerary subunits COX4I1 (or COX4I2), COX5A, COX5B, COX6A1 (or COX6A2), COX6B1 (or COX6B2), COX6C, COX7A2 (or COX7A1), COX7B, COX7C, COX8A and NDUFA4, which are encoded in the nuclear genome. The complex exists as a monomer or a dimer and forms supercomplexes (SCs) in the inner mitochondrial membrane with NADH-ubiquinone oxidoreductase (complex I, CI) and ubiquinol-cytochrome c oxidoreductase (cytochrome b-c1 complex, complex III, CIII), resulting in different assemblies (supercomplex SCI(1)III(2)IV(1) and megacomplex MCI(2)III(2)IV(2)). Found in a complex with TMEM177, COA6, COX18, COX20, SCO1 and SCO2. Interacts with TMEM177 in a COX20-dependent manner. Interacts with COX20. Interacts with COX16. It depends on Cu cation as a cofactor.

The protein resides in the mitochondrion inner membrane. The enzyme catalyses 4 Fe(II)-[cytochrome c] + O2 + 8 H(+)(in) = 4 Fe(III)-[cytochrome c] + 2 H2O + 4 H(+)(out). Component of the cytochrome c oxidase, the last enzyme in the mitochondrial electron transport chain which drives oxidative phosphorylation. The respiratory chain contains 3 multisubunit complexes succinate dehydrogenase (complex II, CII), ubiquinol-cytochrome c oxidoreductase (cytochrome b-c1 complex, complex III, CIII) and cytochrome c oxidase (complex IV, CIV), that cooperate to transfer electrons derived from NADH and succinate to molecular oxygen, creating an electrochemical gradient over the inner membrane that drives transmembrane transport and the ATP synthase. Cytochrome c oxidase is the component of the respiratory chain that catalyzes the reduction of oxygen to water. Electrons originating from reduced cytochrome c in the intermembrane space (IMS) are transferred via the dinuclear copper A center (CU(A)) of subunit 2 and heme A of subunit 1 to the active site in subunit 1, a binuclear center (BNC) formed by heme A3 and copper B (CU(B)). The BNC reduces molecular oxygen to 2 water molecules using 4 electrons from cytochrome c in the IMS and 4 protons from the mitochondrial matrix. In Homo sapiens (Human), this protein is Cytochrome c oxidase subunit 2 (MT-CO2).